A 297-amino-acid polypeptide reads, in one-letter code: Lysenin (297 aa).

The tract at residues 10 to 33 is N-terminal cap domain; that stretch reads EQIEVDVVAVWKEGYVYENRGSTS. The tract at residues 34–107 is beta-hairpin domain; it reads VDQKITITKG…SKVIEHTITI (74 aa). The segment at 108–156 is N-terminal cap domain; that stretch reads PPTSKFTRWQLNADVGGADIEYMYLIDEVTPIGGTQSIPQVITSRAKII. Residues 157-297 form a C-terminal receptor-binding domain region; sequence VGRQIILGKT…EDKWILEVVG (141 aa). Positions 185, 227, 233, and 282 each coordinate an N-(acyl)-sphingosylphosphocholine. The cysteines at positions 272 and 283 are disulfide-linked.

This sequence belongs to the lysenin family. As to quaternary structure, binds to sphingomyelin as a monomer by using its C-terminal domain. Forms a nonamer when sphingomyelin/lysenin ratio is lower than ca 500. Oligomerization, but not binding, is influenced by the fluidity of sphingomyelin. In terms of tissue distribution, expressed by coelomocytes.

The protein localises to the secreted. It is found in the target cell membrane. Its function is as follows. Pore-forming toxin that defensively acts against parasitic microorganisms by forming pores in sphingomyelin-containing membranes. Has hemolytic activity and is also cytotoxic to spermatozoa of some species of invertebrates and many species of vertebrates and to amphibian larvae, guinea pig polymorphonuclear leukocytes, chicken fibroblasts, normal spleen cells and various tumor cells. Is lethal for various species of reptiles, amphibian, birds and mammals. Induces smooth muscle contraction. It binds sphingomyelin and induces hemolysis in the same manner as lysenin-related protein 2, and is 10-fold more effective than lysenin-related protein 1. The polypeptide is Lysenin (Eisenia fetida (Red wiggler worm)).